A 674-amino-acid polypeptide reads, in one-letter code: MAAGGAEGGSGPGAAMGDCAEIKSQFRTREGFYKLLPGDGAARRSGPASAQTPVPPQPPQPPPGPASASGPGAAGPASSPPPAGPGPGPALPAVRLSLVRLGEPDSAGAGEPPATPAGLGSGGDRVCFNLGRELYFYPGCCRRGSQRSIDLNKPIDKRIYKGTQPTCHDFNQFTAATETISLLVGFSAGQVQYLDLIKKDTSKLFNEERLIDKTKVTYLKWLPESESLFLASHASGHLYLYNVSHPCASAPPQYSLLKQGEGFSVYAAKSKAPRNPLAKWAVGEGPLNEFAFSPDGRHLACVSQDGCLRVFHFDSMLLRGLMKSYFGGLLCVCWSPDGRYVVTGGEDDLVTVWSFTEGRVVARGHGHKSWVNAVAFDPYTTRAEEAATAAGADGERSGEEEEEEPEAAGTGSAGGAPLSPLPKAGSITYRFGSAGQDTQFCLWDLTEDVLYPHPPLARTRTLPGTPGTTPPAASSSRGGEPGPGPLPRSLSRSNSLPHPAGGGKAGGPGVAAEPGTPFSIGRFATLTLQERRDRGAEKEHKRYHSLGNISRGGSGGSGSGGEKPSGPVPRSRLDPAKVLGTALCPRIHEVPLLEPLVCKKIAQERLTVLLFLEDCIITACQEGLICTWARPGKAFTDEETEAQTGEGSWPRSPSKSVVEGISSQPGNSPSGTVV.

Residue Ala-2 is modified to N-acetylalanine. 2 disordered regions span residues 31-92 (GFYK…PALP) and 103-122 (EPDS…LGSG). The segment covering 53 to 65 (PVPPQPPQPPPGP) has biased composition (pro residues). Residues 66 to 77 (ASASGPGAAGPA) are compositionally biased toward low complexity. The span at 78–90 (SSPPPAGPGPGPA) shows a compositional bias: pro residues. Positions 107–118 (AGAGEPPATPAG) are enriched in low complexity. WD repeat units lie at residues 211–251 (IDKT…ASAP), 282–321 (VGEG…LRGL), 324–363 (SYFG…VVAR), 366–409 (GHKS…EAAG), and 413–453 (AGGA…LYPH). 4 disordered regions span residues 384–419 (EEAA…APLS), 456–516 (LART…EPGT), 532–573 (RDRG…RSRL), and 637–674 (DEET…GTVV). Composition is skewed to low complexity over residues 457–478 (ARTR…SSRG) and 487–499 (PRSL…LPHP). Residue Ser-495 is modified to Phosphoserine. 2 stretches are compositionally biased toward gly residues: residues 500 to 509 (AGGGKAGGPG) and 550 to 563 (SRGG…GGEK). At Arg-551 the chain carries Omega-N-methylarginine. The stretch at 601–638 (IAQERLTVLLFLEDCIITACQEGLICTWARPGKAFTDE) is one WD 6 repeat. Positions 642–674 (AQTGEGSWPRSPSKSVVEGISSQPGNSPSGTVV) are enriched in polar residues.

In terms of assembly, component of the USP12/DMWD/WDR48 deubiquitinating complex. Interacts with USP12; promotes its enzymatic activity. Interacts with USP46.

The protein localises to the cytoplasm. It localises to the nucleus. The protein resides in the perikaryon. It is found in the cell projection. Its subcellular location is the dendrite. In terms of biological role, regulator of the deubiquitinating USP12/DMWD/WDR48 complex. Functions as a cofactor that promotes USP12 enzymatic activity. This chain is Dystrophia myotonica WD repeat-containing protein, found in Homo sapiens (Human).